Consider the following 167-residue polypeptide: Ribosome maturation factor RimP (167 aa).

The protein belongs to the RimP family.

Its subcellular location is the cytoplasm. Functionally, required for maturation of 30S ribosomal subunits. The polypeptide is Ribosome maturation factor RimP (Streptomyces griseus subsp. griseus (strain JCM 4626 / CBS 651.72 / NBRC 13350 / KCC S-0626 / ISP 5235)).